A 316-amino-acid polypeptide reads, in one-letter code: Calumenin-B (316 aa).

Residues 1–19 form the signal peptide; sequence MELRPLVMCFALCVVYASS. 6 consecutive EF-hand domains span residues 69–104, 105–140, 152–187, 189–224, 230–265, and 266–301; these read ESKE…SQKR, WIYD…YILD, QMIS…EEYD, MKDI…QEGD, WVRT…SDYD, and HAEA…FVGS. Ca(2+) contacts are provided by aspartate 82, aspartate 84, aspartate 86, tyrosine 88, glutamate 93, aspartate 118, asparagine 120, aspartate 122, and glutamate 129. A glycan (N-linked (GlcNAc...) asparagine) is linked at asparagine 132. Ca(2+)-binding residues include aspartate 165, aspartate 167, aspartate 169, lysine 171, glutamate 176, aspartate 202, asparagine 204, aspartate 206, glutamate 213, aspartate 243, asparagine 245, aspartate 247, arginine 249, glutamate 254, aspartate 279, aspartate 281, aspartate 283, lysine 285, and glutamate 290. The Prevents secretion from ER signature appears at 313–316; that stretch reads HDEF.

The protein belongs to the CREC family. As to quaternary structure, interacts with ggcx.

The protein resides in the endoplasmic reticulum membrane. The protein localises to the golgi apparatus. It localises to the secreted. Its subcellular location is the melanosome. It is found in the sarcoplasmic reticulum lumen. Its function is as follows. Involved in regulation of vitamin K-dependent carboxylation of multiple N-terminal glutamate residues. Seems to inhibit gamma-carboxylase ggcx. Binds 7 calcium ions with a low affinity. This Salmo salar (Atlantic salmon) protein is Calumenin-B (calub).